A 482-amino-acid polypeptide reads, in one-letter code: MIKGTGHMIVNIANDRGMSIDSIRKTIKESVLIAYKKYFGSNENAFIKFDDDTGDLSVYAKKKIVKEVKDSLLEILEKDISKENIVEGDYAYIEINPKVFDRLSIQVAKQRTKNDLQGIEDNEILSEFKSKLNKVVIGYVQQNRNGDLYVNLGNTDGIIPKKYQSPREVYNLNDKIRVLVYNVKKGKNGIEVILSRTHPKFIEELLALEIPEIEEGIIKIHKIVRDPGYRIKVAVYSEKEEIDPVGPCIGQKGVRIQSIIKELEGEKIDIIPYSKDIKEFIKDSLTPSKIEHVYILDEDLHKALVVVSDDQLSLAIGKMGQNVRLANRLLDWAIDVKTSSQFAEMKANSEFKQETLEMFDKVMQDVVEEEQFEEISKISDLKLLDPSVISNLSKEGFDDINNFLQADEGVLFNLGVSYEKQEEINKILKEGMIIIANDNDESMEKVEEDEELLCPECGVVINENMTSCPGCKIGLSFEFEEE.

One can recognise an S1 motif domain in the interval 133–197 (NKVVIGYVQQ…NGIEVILSRT (65 aa)). The region spanning 300–446 (LHKALVVVSD…NDNDESMEKV (147 aa)) is the KH domain.

Belongs to the NusA family. Monomer. Binds directly to the core enzyme of the DNA-dependent RNA polymerase and to nascent RNA.

Its subcellular location is the cytoplasm. In terms of biological role, participates in both transcription termination and antitermination. The sequence is that of Transcription termination/antitermination protein NusA from Borreliella burgdorferi (strain ATCC 35210 / DSM 4680 / CIP 102532 / B31) (Borrelia burgdorferi).